The sequence spans 392 residues: MNSLGFDKAPQDTRVVVAMSGGVDSSVTAALLKEQGYDVVGITLQLYDHGLTVGRKGACCAGQDIYDARQVADRIDIPHYVLDYESRFGQSVIDDFADSYLRGETPIPCVRCNQRVKFRDLLAQARDLGADCLATGHYARRVAGPTGPALHRGADPARDQSYFLFATTPAQLDYLRFPIGHLPKSETRALAERLGLAVADKPDSQDICFVPAGNYAQVVEKLRPGAVEPGEIVHLDGRVLGRHDGVIRYTVGQRRGLGIGGRRTPEGEELDPLYVVRVEPETRRVVVGPRTALARDRVLVREVNWLGGTDTADVPVTVKLRSAQPALPARVSLTADGGAVVTLTQPQYGVAPGQAAVFYQGDRVLGGGWIVRAEASPALADAPIPAGAGTAL.

ATP contacts are provided by residues Ala18–Ser25 and Leu44. Residue Cys112 is the Nucleophile of the active site. A disulfide bridge connects residues Cys112 and Cys208. Gly136 contributes to the ATP binding site. Residues Arg158–Gln160 are interaction with tRNA. The Cysteine persulfide intermediate role is filled by Cys208.

Belongs to the MnmA/TRMU family.

It localises to the cytoplasm. The enzyme catalyses S-sulfanyl-L-cysteinyl-[protein] + uridine(34) in tRNA + AH2 + ATP = 2-thiouridine(34) in tRNA + L-cysteinyl-[protein] + A + AMP + diphosphate + H(+). Functionally, catalyzes the 2-thiolation of uridine at the wobble position (U34) of tRNA, leading to the formation of s(2)U34. The protein is tRNA-specific 2-thiouridylase MnmA of Rhodospirillum centenum (strain ATCC 51521 / SW).